The sequence spans 230 residues: uncharacterized protein (230 aa).

Disordered regions lie at residues 63–90 (TDCQ…KKTI) and 194–230 (KKLE…YKEH). Over residues 194 to 217 (KKLEEREQMDKHPQDRDNKDKEVN) the composition is skewed to basic and acidic residues.

This is an uncharacterized protein from Caenorhabditis elegans.